A 119-amino-acid chain; its full sequence is Large ribosomal subunit protein uL14m (119 aa).

This sequence belongs to the universal ribosomal protein uL14 family.

The protein localises to the mitochondrion. The chain is Large ribosomal subunit protein uL14m from Tetrahymena pyriformis.